A 249-amino-acid polypeptide reads, in one-letter code: Protein TIFY 10B (249 aa).

Residues 113 to 148 enclose the Tify domain; it reads PESQSAPLTIFYGGRVMVFDDFSAEKAKEVIDLANK. The Jas signature appears at 204–229; it reads PIARRASLHRFLEKRKDRITSKAPYQ. The short motif at 206–213 is the Nuclear localization signal element; sequence ARRASLHR. The tract at residues 225-249 is disordered; sequence KAPYQIDGSAEASSKPTNPAWLSSR. Polar residues predominate over residues 235-249; sequence EASSKPTNPAWLSSR.

It belongs to the TIFY/JAZ family. Homo- and heterodimer. Interacts with COI1, MYC2, MYC3, MYC4, AFPH2/NINJA, TIFY10A/JAZ1, TIFY6B/JAZ3, TIFY11A/JAZ5, TIFY11B/JAZ6, TIFY5A/JAZ8, TIFY7/JAZ9, TIFY9/JAZ10, TIFY3A/JAZ11 and TIFY3B/JAZ12. Interacts with RHD6 and RSL1. In terms of assembly, (Microbial infection) Interacts with the pathogenic Pseudomonas syringae HopZ1a protein. Post-translationally, (Microbial infection) Acetylated by Pseudomonas syringae HopZ1a. In terms of processing, ubiquitinated. Targeted for degradation by the SCF(COI1) E3 ubiquitin ligase-proteasome pathway during jasmonate signaling. Expressed in cotyledons, hypocotyls, roots, sepals, petal vascular tissue and stigmas of developing flowers. Expressed in stamen filaments after jasmonic acid treatment.

It is found in the nucleus. Repressor of jasmonate responses. Jasmonoyl-isoleucine (JA-Ile) specifically promotes COI1-TIFY10B/JAZ2 interaction. Activated by MYC2, MYC3 and MYC4 transcription factors. Interacts with and suppresses RHD6 and RSL1 transcription factor activities to negatively regulate jasmonate-stimulated root hair development. This chain is Protein TIFY 10B, found in Arabidopsis thaliana (Mouse-ear cress).